Reading from the N-terminus, the 440-residue chain is tRNA(Ile)-lysidine synthase (440 aa).

Position 13–18 (13–18 (SGGADS)) interacts with ATP.

Belongs to the tRNA(Ile)-lysidine synthase family.

It is found in the cytoplasm. The enzyme catalyses cytidine(34) in tRNA(Ile2) + L-lysine + ATP = lysidine(34) in tRNA(Ile2) + AMP + diphosphate + H(+). Its function is as follows. Ligates lysine onto the cytidine present at position 34 of the AUA codon-specific tRNA(Ile) that contains the anticodon CAU, in an ATP-dependent manner. Cytidine is converted to lysidine, thus changing the amino acid specificity of the tRNA from methionine to isoleucine. This is tRNA(Ile)-lysidine synthase from Solibacter usitatus (strain Ellin6076).